The chain runs to 274 residues: MAIHLYKTSTPSTRNGTVDSQVKSNPRNNLIYGQHRCGKGRNARGIITAGHRGGGHKRLYRKIDFRRTEKDIYGRIVTIEYDPNRNAYICLIHYGDGEKRYILHPRGALIGDTIVSGTEVPIKMGNALPLTDMPLGTAIHNIEITLGKGGQLARAAGAVAKLIAKEGKSATLKLPSGEVRLISKNCSATVGQVGNVGVNQKSLGRAGSKRWLGKRPVVRGVVMNPVDHPHGGGEGRAPIGRKKPTTPWGYPALGRRSRKRNKYSDNLILRRRSK.

Disordered stretches follow at residues Met1–Asn25 and Asn224–Lys274. The span at Lys7–Asn25 shows a compositional bias: polar residues.

It belongs to the universal ribosomal protein uL2 family. Part of the 50S ribosomal subunit.

The protein localises to the plastid. It localises to the chloroplast. The sequence is that of Large ribosomal subunit protein uL2cz (rpl2-A) from Coffea arabica (Arabian coffee).